The primary structure comprises 1010 residues: Regulator of telomere elongation helicase 1 homolog (1010 aa).

The Helicase ATP-binding domain maps to 7-333 (NGITVNFPFE…KEMLLQLEKT (327 aa)). 42–49 (SPTGTGKT) is an ATP binding site. 4 residues coordinate [4Fe-4S] cluster: Cys157, Cys175, Cys184, and Cys220. A DEAH box motif is present at residues 263–266 (DEAH). The disordered stretch occupies residues 912–931 (TSDDEDPGRTGDDPTRQAPE). The segment covering 918-931 (PGRTGDDPTRQAPE) has biased composition (basic and acidic residues).

The protein belongs to the helicase family. RAD3/XPD subfamily.

The protein localises to the nucleus. It carries out the reaction ATP + H2O = ADP + phosphate + H(+). In terms of biological role, a probable ATP-dependent DNA helicase implicated in DNA repair and the maintenance of genomic stability. Acts as an anti-recombinase to counteract toxic recombination and limit crossover during meiosis. Regulates meiotic recombination and crossover homeostasis by physically dissociating strand invasion events and thereby promotes noncrossover repair by meiotic synthesis dependent strand annealing (SDSA) as well as disassembly of D loop recombination intermediates. This Aedes aegypti (Yellowfever mosquito) protein is Regulator of telomere elongation helicase 1 homolog.